The primary structure comprises 383 residues: S-adenosylmethionine synthase (383 aa).

His15 provides a ligand contact to ATP. Asp17 contacts Mg(2+). Glu43 provides a ligand contact to K(+). L-methionine-binding residues include Glu56 and Gln99. A flexible loop region spans residues 99-109 (QSPDINQGVDR). Residues 164–166 (DAK), 230–231 (RF), Asp239, 245–246 (RK), Ala262, and Lys266 each bind ATP. An L-methionine-binding site is contributed by Asp239. Residue Lys270 participates in L-methionine binding.

Belongs to the AdoMet synthase family. In terms of assembly, homotetramer; dimer of dimers. Mg(2+) serves as cofactor. Requires K(+) as cofactor.

It localises to the cytoplasm. It carries out the reaction L-methionine + ATP + H2O = S-adenosyl-L-methionine + phosphate + diphosphate. The protein operates within amino-acid biosynthesis; S-adenosyl-L-methionine biosynthesis; S-adenosyl-L-methionine from L-methionine: step 1/1. Catalyzes the formation of S-adenosylmethionine (AdoMet) from methionine and ATP. The overall synthetic reaction is composed of two sequential steps, AdoMet formation and the subsequent tripolyphosphate hydrolysis which occurs prior to release of AdoMet from the enzyme. The sequence is that of S-adenosylmethionine synthase from Pectobacterium carotovorum subsp. carotovorum (strain PC1).